A 220-amino-acid chain; its full sequence is Guanylate kinase (220 aa).

Positions 15 to 194 constitute a Guanylate kinase-like domain; sequence GLMLVISSPS…AFDAVQSIVK (180 aa). 22 to 29 contributes to the ATP binding site; it reads SPSGAGKS.

Belongs to the guanylate kinase family.

Its subcellular location is the cytoplasm. The catalysed reaction is GMP + ATP = GDP + ADP. In terms of biological role, essential for recycling GMP and indirectly, cGMP. The polypeptide is Guanylate kinase (Rhizobium etli (strain ATCC 51251 / DSM 11541 / JCM 21823 / NBRC 15573 / CFN 42)).